Here is a 323-residue protein sequence, read N- to C-terminus: GTP 3',8-cyclase (323 aa).

A Radical SAM core domain is found at 4-233 (KYGREIDYLR…NGPAKYISIE (230 aa)). GTP is bound at residue Arg13. Cys20 and Cys24 together coordinate [4Fe-4S] cluster. Tyr26 serves as a coordination point for S-adenosyl-L-methionine. Cys27 is a binding site for [4Fe-4S] cluster. Arg63 contacts GTP. Gly67 contributes to the S-adenosyl-L-methionine binding site. Thr94 is a binding site for GTP. Ser118 is an S-adenosyl-L-methionine binding site. A GTP-binding site is contributed by Lys154. Met188 provides a ligand contact to S-adenosyl-L-methionine. Residues Cys250 and Cys253 each contribute to the [4Fe-4S] cluster site. A GTP-binding site is contributed by 255 to 257 (RIR). Cys267 serves as a coordination point for [4Fe-4S] cluster.

It belongs to the radical SAM superfamily. MoaA family. As to quaternary structure, monomer and homodimer. [4Fe-4S] cluster serves as cofactor.

It carries out the reaction GTP + AH2 + S-adenosyl-L-methionine = (8S)-3',8-cyclo-7,8-dihydroguanosine 5'-triphosphate + 5'-deoxyadenosine + L-methionine + A + H(+). It participates in cofactor biosynthesis; molybdopterin biosynthesis. In terms of biological role, catalyzes the cyclization of GTP to (8S)-3',8-cyclo-7,8-dihydroguanosine 5'-triphosphate. This Clostridium perfringens (strain SM101 / Type A) protein is GTP 3',8-cyclase.